The chain runs to 4678 residues: E3 ubiquitin-protein ligase MYCBP2 (4678 aa).

3 disordered regions span residues 87–127 (DRDQ…RSKS), 172–192 (SKNS…SKEP), and 609–628 (ASKG…KPYK). A compositionally biased stretch (basic residues) spans 100 to 124 (SRNKKILNKKKLKRKQKSKSKVKTR). S127, S178, S181, and S183 each carry phosphoserine. 5 RCC1 repeats span residues 600-655 (DGSI…VISK), 699-755 (NGEV…MMCP), 907-957 (KRDK…VLME), 958-1008 (NGDV…VLLM), and 1010-1066 (GQVF…LRID). Positions 898 to 910 (RSHPAQLKHKRDK) are enriched in basic residues. The tract at residues 898-928 (RSHPAQLKHKRDKHKDGSGERGEKDASKITT) is disordered. The span at 911 to 924 (HKDGSGERGEKDAS) shows a compositional bias: basic and acidic residues. Residues 1235–1386 (NRFESHGGGW…GQIPQLLYRL (152 aa)) are PHR domain 1. A Phosphoserine modification is found at S1624. A PHR domain 2 region spans residues 1726-1884 (NRFTKTSQGR…GQIPQILYYR (159 aa)). C1748 and C1863 form a disulfide bridge. Disordered stretches follow at residues 1993–2012 (FNPN…QGLS) and 2321–2340 (QQDQ…VTAA). Over residues 1994-2012 (NPNQSTDSTTGNQPEQGLS) the composition is skewed to polar residues. The RAE1 binding stretch occupies residues 2022-2550 (VIESEHPYKP…NQHLGKSLLV (529 aa)). Residues 2341–2443 (SSNTDMTYGG…IDAGLEVKVK (103 aa)) form a Filamin repeat. T2683 carries the phosphothreonine modification. Disordered regions lie at residues 2709–2931 (LGNS…LHSE), 2943–2963 (TNSL…VDEG), 2979–3020 (EQEM…EPAK), and 3066–3085 (APIR…ETKL). Over residues 2718 to 2733 (NISTSSKPASTSGKSE) the composition is skewed to polar residues. The span at 2742-2760 (LKPDGRMSRTTADQKKPRG) shows a compositional bias: basic and acidic residues. Phosphoserine is present on S2769. Residues 2775–2785 (DAAKLRSDSHS) are compositionally biased toward basic and acidic residues. The span at 2786 to 2810 (RSLSPNHNTLQTLKSDGRMPSSSRA) shows a compositional bias: polar residues. Phosphoserine is present on residues S2787, S2789, S2833, S2839, S2869, S2871, and S2920. A compositionally biased stretch (low complexity) spans 2828 to 2843 (PANRSSPSGASSPRSS). Residues 2860 to 2871 (TKLDPPRERSKS) show a composition bias toward basic and acidic residues. Phosphoserine is present on S2985. Residues 2988–3001 (ISRKCANRHTRPKK) show a composition bias toward basic residues. Residues S3090, S3478, and S3505 each carry the phosphoserine modification. Residues 3605–3631 (PVEPEEEEDEENKTSKENSEQEKDTRV) form a disordered region. The segment covering 3616 to 3631 (NKTSKENSEQEKDTRV) has biased composition (basic and acidic residues). The region spanning 3719 to 3897 (SISIQSGFEA…VAQQRNCEAE (179 aa)) is the DOC domain. The disordered stretch occupies residues 3915-3934 (SGDAEPTPEQEEKALLSSPE). Phosphothreonine is present on T3921. Phosphoserine is present on residues S3931 and S3932. The Zn(2+) site is built by C4428, C4431, C4446, H4448, H4451, C4454, C4475, C4478, C4544, and C4547. The segment at 4428-4479 (CMICFTEALSAAPAIQLDCSHIFHLQCCRRVLENRWLGPRITFGFISCPICK) adopts an RING-type; atypical zinc-finger fold. The tract at residues 4539–4676 (YAYYVCYKCR…LGCGVCRNAH (138 aa)) is tandem cysteine domain. Residue C4558 is part of the active site. 7 residues coordinate Zn(2+): C4575, C4578, C4587, H4590, C4599, C4602, and C4603. C4610 is an active-site residue. The Zn(2+) site is built by C4617, C4620, C4638, C4652, H4658, C4669, and C4672.

This sequence belongs to the RING-Cys relay (RCR) family. Interacts with MYC. Interacts with TSC2 (tuberin) when TSC2 is in complex with TSC1 (hamartin). Interacts with FBXO45. Interacts with RAE1. Interacts with CPNE1 (via VWFA domain) and CPNE4 (via VWFA domain). Interacts with (sumoylated) RANGAP1; interaction with sumoylated RANGAP1 inhibits E3 ubiquitin-protein ligase activity and promotes MYCBP2 translocation to the nucleus. Interacts with RAN. Interacts with ATP13A2; the interaction inhibits the ubiquitination of TSC2 by MYCBP2. Interacts with USP11. In terms of processing, autoubiquitinated. As to expression, expressed in all tissues examined, expression is exceptionally abundant in brain and thymus. Colocalizes with TSC1 and TSC2 along the neurites and in the growth cones. Highly expressed in peripheral and central neurons. Colocalized with TSC1 in one of the filopodial extensions at the tip of a growth cone.

It localises to the nucleus. The protein localises to the cell projection. It is found in the axon. Its subcellular location is the cytoplasm. The protein resides in the cytoskeleton. It catalyses the reaction [E2 ubiquitin-conjugating enzyme]-S-ubiquitinyl-L-cysteine + [acceptor protein]-L-threonine = [E2 ubiquitin-conjugating enzyme]-L-cysteine + [acceptor protein]-3-O-ubiquitinyl-L-threonine.. The protein operates within protein modification; protein ubiquitination. Atypical E3 ubiquitin-protein ligase which specifically mediates ubiquitination of threonine and serine residues on target proteins, instead of ubiquitinating lysine residues. Shows esterification activity towards both threonine and serine, with a preference for threonine, and acts via two essential catalytic cysteine residues that relay ubiquitin to its substrate via thioester intermediates. Interacts with the E2 enzymes UBE2D1, UBE2D3, UBE2E1 and UBE2L3. Plays a key role in neural development, probably by mediating ubiquitination of threonine residues on target proteins. Involved in different processes such as regulation of neurite outgrowth, synaptic growth, synaptogenesis and axon degeneration. Required for the formation of major central nervous system axon tracts. Required for proper axon growth by regulating axon navigation and axon branching: acts by regulating the subcellular location and stability of MAP3K12/DLK. Required for proper localization of retinogeniculate projections but not for eye-specific segregation. Regulates axon guidance in the olfactory system. Involved in Wallerian axon degeneration, an evolutionarily conserved process that drives the loss of damaged axons: acts by promoting destabilization of NMNAT2, probably via ubiquitination of NMNAT2. Catalyzes ubiquitination of threonine and/or serine residues on NMNAT2, consequences of threonine and/or serine ubiquitination are however unknown. Regulates the internalization of TRPV1 in peripheral sensory neurons. Mediates ubiquitination and subsequent proteasomal degradation of TSC2/tuberin. Independently of the E3 ubiquitin-protein ligase activity, also acts as a guanosine exchange factor (GEF) for RAN in neurons of dorsal root ganglia. May function as a facilitator or regulator of transcriptional activation by MYC. Acts in concert with HUWE1 to regulate the circadian clock gene expression by promoting the lithium-induced ubiquination and degradation of NR1D1. This Homo sapiens (Human) protein is E3 ubiquitin-protein ligase MYCBP2.